Reading from the N-terminus, the 212-residue chain is MNLLIMGLPGAGKGTQAAKIVEQFHVAHISTGDMFRAAMVNQTEMGVLAKSYIDKGELVPDEVTNGIVKERLSQDDIKETGFLLDGYPRTIEQAHALDKTLAELGIELEGVINIEVNPDSLLERLSGRIIHRVTGETFHKVFNPPVDYKEEDYYQREDDKPETVKRRLDVNIAQGEPIIAHYRAKGLVHDIEGNQDINDVFSDIEKVLTNLK.

10–15 is an ATP binding site; sequence GAGKGT. An NMP region spans residues 30–59; that stretch reads STGDMFRAAMVNQTEMGVLAKSYIDKGELV. Residues Thr-31, Arg-36, 57–59, 86–89, and Gln-93 each bind AMP; these read ELV and GYPR. Residues 127 to 159 are LID; the sequence is GRIIHRVTGETFHKVFNPPVDYKEEDYYQREDD. Residues Arg-128 and 137-138 contribute to the ATP site; that span reads TF. The AMP site is built by Arg-156 and Arg-167. Gln-195 lines the ATP pocket.

It belongs to the adenylate kinase family. In terms of assembly, monomer.

Its subcellular location is the cytoplasm. It carries out the reaction AMP + ATP = 2 ADP. Its pathway is purine metabolism; AMP biosynthesis via salvage pathway; AMP from ADP: step 1/1. In terms of biological role, catalyzes the reversible transfer of the terminal phosphate group between ATP and AMP. Plays an important role in cellular energy homeostasis and in adenine nucleotide metabolism. This chain is Adenylate kinase, found in Streptococcus pneumoniae (strain 70585).